Consider the following 228-residue polypeptide: HTH-type transcriptional regulator TfdT (228 aa).

The HTH lysR-type domain occupies 1 to 58 (MEIRQLKYFVAVAEAGGFGTAAQRMHISQPPLTRQIQALERDIGAKLFERTARGVELT). Residues 18 to 37 (FGTAAQRMHISQPPLTRQIQ) constitute a DNA-binding region (H-T-H motif).

The protein belongs to the LysR transcriptional regulatory family.

It localises to the cytoplasm. Its function is as follows. Does not seem to be involved in the regulation of 3-chlorocatechol degradation. Does not activate the expression of its presumed target operon, tfdCDEF. The polypeptide is HTH-type transcriptional regulator TfdT (tfdT) (Cupriavidus pinatubonensis (strain JMP 134 / LMG 1197) (Cupriavidus necator (strain JMP 134))).